Here is an 847-residue protein sequence, read N- to C-terminus: MDIRNEFLQFFQNKGHEIYPSMPLVPNDATLLFTNAGMVQFKDIFTGIVPRPSIPRAASSQLCMRAGGKHNDLENVGYTARHHTLFEMLGNFSFGDYFKEEAILFAWEFVTKNLGFKPKDLYISVHEKDDEAVKLWEKFVPVDRIKKMGDKDNFWQMGDSGPCGPCSEIYIDQGEKHFKGSEDYFGGEGDRFLEIWNLVFMQYERSNDGVLSPLPKPSIDTGMGLERVQALLEHKLNNFDSSLFAPLMEEISELTGLDYASEFQPSFRVVADHARAVAFLLAQEVHFNKEGRGYVLRRILRRALRHGYLMGLKEAFLYKVVGVVCEQFSNVHAYLKESKEMVMKECFEEEERFLETLESGMELFNLSLTHLNENKIFDGKIAFKLYDTFGFPLDLTNDMLRSHGACVDMQGFENCMQEQVKRSKASWKGKQNNADFSAILNAYAPNEFVGYETTECLANALGFFDSDFKEITEANPNQEVWVLLEKTPFYAEGGGAIGDRGTLFKDNEEAALVLDTKNFFGLNFSLLEIKKALKKGDQVIAQVSDERLEIAKHHSATHLLQSALREVLGSHVSQAGSLVESKRLRFDFSHAKALNDEELEKVEDLVNAQIFKHLTSQVEHMPLNQAKDKGALALFSEKYAENVRVVSFKEASIELCGGIHVENTGLIGGFRIVKESGVSSGVRRIEAVCGKAFYQLTKEENKELKNAKTLLKNNDVIAGINKLKESVKNSQKAPVSMDLPVEKIHGVNLVVGVVEQGDIKEMIDRLKSKHEKLLAIVFKKENERITLACGVKNVPIKANAWANEVAQILGGKGGGRDDFASAGGKDIENLQAALNLAKNTALKALEG.

His554, His558, Cys656, and His660 together coordinate Zn(2+).

It belongs to the class-II aminoacyl-tRNA synthetase family. Zn(2+) serves as cofactor.

It localises to the cytoplasm. It catalyses the reaction tRNA(Ala) + L-alanine + ATP = L-alanyl-tRNA(Ala) + AMP + diphosphate. Its function is as follows. Catalyzes the attachment of alanine to tRNA(Ala) in a two-step reaction: alanine is first activated by ATP to form Ala-AMP and then transferred to the acceptor end of tRNA(Ala). Also edits incorrectly charged Ser-tRNA(Ala) and Gly-tRNA(Ala) via its editing domain. The sequence is that of Alanine--tRNA ligase from Helicobacter pylori (strain J99 / ATCC 700824) (Campylobacter pylori J99).